Reading from the N-terminus, the 76-residue chain is Conotoxin TsMLCL-03 (76 aa).

The signal sequence occupies residues 1–19; that stretch reads MLCLPVFIILLLLASPAAP. The propeptide occupies 20-44; the sequence is NPLERRIQSDLIRTALEDADMKTPK.

It belongs to the conotoxin T superfamily. In terms of processing, contains 2 disulfide bonds that can be either 'C1-C3, C2-C4' or 'C1-C4, C2-C3', since these disulfide connectivities have been observed for conotoxins with cysteine framework V (for examples, see AC P0DQQ7 and AC P81755). In terms of tissue distribution, expressed by the venom duct.

It is found in the secreted. The sequence is that of Conotoxin TsMLCL-03 from Conus tessulatus (Tessellate cone).